We begin with the raw amino-acid sequence, 156 residues long: 3-hydroxyacyl-[acyl-carrier-protein] dehydratase FabZ (156 aa).

The active site involves His62.

It belongs to the thioester dehydratase family. FabZ subfamily.

The protein localises to the cytoplasm. The enzyme catalyses a (3R)-hydroxyacyl-[ACP] = a (2E)-enoyl-[ACP] + H2O. Its function is as follows. Involved in unsaturated fatty acids biosynthesis. Catalyzes the dehydration of short chain beta-hydroxyacyl-ACPs and long chain saturated and unsaturated beta-hydroxyacyl-ACPs. The chain is 3-hydroxyacyl-[acyl-carrier-protein] dehydratase FabZ from Parasynechococcus marenigrum (strain WH8102).